We begin with the raw amino-acid sequence, 183 residues long: Orotate phosphoribosyltransferase (183 aa).

Residues R21, K88, and E112–S120 each bind 5-phospho-alpha-D-ribose 1-diphosphate. Orotate is bound by residues T116 and R144.

It belongs to the purine/pyrimidine phosphoribosyltransferase family. PyrE subfamily. As to quaternary structure, homodimer. Requires Mg(2+) as cofactor.

The enzyme catalyses orotidine 5'-phosphate + diphosphate = orotate + 5-phospho-alpha-D-ribose 1-diphosphate. It functions in the pathway pyrimidine metabolism; UMP biosynthesis via de novo pathway; UMP from orotate: step 1/2. Functionally, catalyzes the transfer of a ribosyl phosphate group from 5-phosphoribose 1-diphosphate to orotate, leading to the formation of orotidine monophosphate (OMP). The polypeptide is Orotate phosphoribosyltransferase (Thermus thermophilus (strain ATCC 27634 / DSM 579 / HB8)).